The primary structure comprises 468 residues: Citrate synthase, mitochondrial (468 aa).

Residues 1 to 30 constitute a mitochondrion transit peptide; that stretch reads MSLISAGRVCARILGAKNSPCALIAARQAS. Active-site residues include histidine 303 and histidine 349. Residue arginine 358 participates in oxaloacetate binding. Aspartate 404 is an active-site residue. Positions 430 and 450 each coordinate oxaloacetate.

The protein belongs to the citrate synthase family. In terms of assembly, homodimer.

The protein localises to the mitochondrion matrix. The enzyme catalyses oxaloacetate + acetyl-CoA + H2O = citrate + CoA + H(+). It participates in carbohydrate metabolism; tricarboxylic acid cycle; isocitrate from oxaloacetate: step 1/2. Key enzyme of the Krebs tricarboxylic acid cycle which catalyzes the synthesis of citrate from acetyl coenzyme A and oxaloacetate. This chain is Citrate synthase, mitochondrial (cs), found in Xenopus laevis (African clawed frog).